The sequence spans 140 residues: L-fucose mutarotase (140 aa).

His22 functions as the Proton donor in the catalytic mechanism. Substrate contacts are provided by residues Asp30, Arg107, and 129–131 (YGN).

The protein belongs to the RbsD / FucU family. FucU mutarotase subfamily. Homodecamer.

Its subcellular location is the cytoplasm. It catalyses the reaction alpha-L-fucose = beta-L-fucose. It functions in the pathway carbohydrate metabolism; L-fucose metabolism. Its function is as follows. Involved in the anomeric conversion of L-fucose. In Salmonella gallinarum (strain 287/91 / NCTC 13346), this protein is L-fucose mutarotase.